Consider the following 87-residue polypeptide: Small ribosomal subunit protein bS18B (87 aa).

Belongs to the bacterial ribosomal protein bS18 family. In terms of assembly, part of the 30S ribosomal subunit. Forms a tight heterodimer with protein bS6.

Binds as a heterodimer with protein bS6 to the central domain of the 16S rRNA, where it helps stabilize the platform of the 30S subunit. This chain is Small ribosomal subunit protein bS18B, found in Mycobacterium marinum (strain ATCC BAA-535 / M).